A 268-amino-acid polypeptide reads, in one-letter code: tRNA (guanine-N(7)-)-methyltransferase (268 aa).

The segment at 1–21 is disordered; that stretch reads MMAGAEAPQPQKRYYRQRAHS. S21 is modified (phosphoserine). S-adenosyl-L-methionine contacts are provided by G78, E101, R103, N134, A135, and L154. D157 is a catalytic residue. Residues 158–166 form an alphaC helix region; the sequence is PHFKRTKHK. Residues T232 and E234 each contribute to the S-adenosyl-L-methionine site. Residues 232 to 240 form an alpha6 helix region; that stretch reads TEEGKKVLR.

It belongs to the class I-like SAM-binding methyltransferase superfamily. TrmB family. Catalytic component of the METTL1-WDR4 complex, composed of METTL1 and WDR4. Phosphorylation at Ser-21 by PKB/AKT1 inactivates its methyltransferase activity via a steric interference mechanism in the active site that locally disrupts the catalytic center. Phosphorylation at Ser-21 does not affect the interaction with WDR4.

The protein resides in the nucleus. It carries out the reaction guanosine(46) in tRNA + S-adenosyl-L-methionine = N(7)-methylguanosine(46) in tRNA + S-adenosyl-L-homocysteine. The enzyme catalyses a guanosine in mRNA + S-adenosyl-L-methionine = an N(7)-methylguanosine in mRNA + S-adenosyl-L-homocysteine. The catalysed reaction is a guanosine in miRNA + S-adenosyl-L-methionine = an N(7)-methylguanosine in miRNA + S-adenosyl-L-homocysteine. The protein operates within tRNA modification; N(7)-methylguanine-tRNA biosynthesis. Functionally, catalytic component of METTL1-WDR4 methyltransferase complex that mediates the formation of N(7)-methylguanine in a subset of RNA species, such as tRNAs, mRNAs and microRNAs (miRNAs). Catalyzes the formation of N(7)-methylguanine at position 46 (m7G46) in a large subset of tRNAs that contain the 5'-RAGGU-3' motif within the variable loop. M7G46 interacts with C13-G22 in the D-loop to stabilize tRNA tertiary structure and protect tRNAs from decay. Also acts as a methyltransferase for a subset of internal N(7)-methylguanine in mRNAs. Internal N(7)-methylguanine methylation of mRNAs in response to stress promotes their relocalization to stress granules, thereby suppressing their translation. Also methylates a specific subset of miRNAs, such as let-7. N(7)-methylguanine methylation of let-7 miRNA promotes let-7 miRNA processing by disrupting an inhibitory secondary structure within the primary miRNA transcript (pri-miRNA). Acts as a regulator of embryonic stem cell self-renewal and differentiation. This chain is tRNA (guanine-N(7)-)-methyltransferase, found in Mus musculus (Mouse).